The chain runs to 59 residues: Large ribosomal subunit protein bL33 (59 aa).

Belongs to the bacterial ribosomal protein bL33 family.

This chain is Large ribosomal subunit protein bL33, found in Prosthecochloris aestuarii (strain DSM 271 / SK 413).